The chain runs to 366 residues: MKFTIERSHLIKPLQQVSGTLGGRASLPILGNLLLKVEENQLSMTATDLEVELISRVTLEGEFEAGSITVPARKFLDICRGLPDSAVITVLLEGDRIQVRSGRSRFSLATLPASDFPNIEDWQSEVQVSLTQAELRGLIEKTQFSMANQDVRYYLNGMLFEIDGTTLRSVATDGHRMAVAQAQLGADFAQKQIIVPRKGVLELVKLLDAPEQPVVLQIGHSNLRAEVNHFVFTSKLVDGRFPDYRRVLPQHTSKTLQTGCEELRQAFSRAAILSNEKFRGVRVNLADNGMRITANNPEQEEAEELLDVSFEGEPIEIGFNVSYILDVLNTLRCDNVRVSMSDANASALVENVDDDSAMYVVMPIRL.

It belongs to the beta sliding clamp family. In terms of assembly, forms a ring-shaped head-to-tail homodimer around DNA which binds and tethers DNA polymerases and other proteins to the DNA. The DNA replisome complex has a single clamp-loading complex (3 tau and 1 each of delta, delta', psi and chi subunits) which binds 3 Pol III cores (1 core on the leading strand and 2 on the lagging strand) each with a beta sliding clamp dimer. Additional proteins in the replisome are other copies of gamma, psi and chi, Ssb, DNA helicase and RNA primase.

Its subcellular location is the cytoplasm. Confers DNA tethering and processivity to DNA polymerases and other proteins. Acts as a clamp, forming a ring around DNA (a reaction catalyzed by the clamp-loading complex) which diffuses in an ATP-independent manner freely and bidirectionally along dsDNA. Initially characterized for its ability to contact the catalytic subunit of DNA polymerase III (Pol III), a complex, multichain enzyme responsible for most of the replicative synthesis in bacteria; Pol III exhibits 3'-5' exonuclease proofreading activity. The beta chain is required for initiation of replication as well as for processivity of DNA replication. This Vibrio cholerae serotype O1 (strain ATCC 39315 / El Tor Inaba N16961) protein is Beta sliding clamp (dnaN).